A 350-amino-acid chain; its full sequence is Hydroxymethylglutaryl-CoA synthase (350 aa).

Residue Glu-83 is the Proton donor/acceptor of the active site. The active-site Acyl-thioester intermediate is the Cys-115. Residues Cys-115 and Thr-156 each coordinate (3S)-3-hydroxy-3-methylglutaryl-CoA. A CoA-binding site is contributed by Arg-204. Residues Thr-206 and His-239 each contribute to the (3S)-3-hydroxy-3-methylglutaryl-CoA site. The active-site Proton donor/acceptor is the His-239. Lys-244 is a binding site for CoA. Asn-271 and Ser-301 together coordinate (3S)-3-hydroxy-3-methylglutaryl-CoA.

This sequence belongs to the thiolase-like superfamily. Archaeal HMG-CoA synthase family. As to quaternary structure, interacts with acetoacetyl-CoA thiolase that catalyzes the precedent step in the pathway and with a DUF35 protein. The acetoacetyl-CoA thiolase/HMG-CoA synthase complex channels the intermediate via a fused CoA-binding site, which allows for efficient coupling of the endergonic thiolase reaction with the exergonic HMGCS reaction.

It catalyses the reaction acetoacetyl-CoA + acetyl-CoA + H2O = (3S)-3-hydroxy-3-methylglutaryl-CoA + CoA + H(+). The protein operates within metabolic intermediate biosynthesis; (R)-mevalonate biosynthesis; (R)-mevalonate from acetyl-CoA: step 2/3. Functionally, catalyzes the condensation of acetyl-CoA with acetoacetyl-CoA to form 3-hydroxy-3-methylglutaryl-CoA (HMG-CoA). Functions in the mevalonate (MVA) pathway leading to isopentenyl diphosphate (IPP), a key precursor for the biosynthesis of isoprenoid compounds that are building blocks of archaeal membrane lipids. This chain is Hydroxymethylglutaryl-CoA synthase, found in Thermococcus gammatolerans (strain DSM 15229 / JCM 11827 / EJ3).